A 390-amino-acid polypeptide reads, in one-letter code: Protein-glutamate methylesterase/protein-glutamine glutaminase (390 aa).

In terms of domain architecture, Response regulatory spans 4-121; that stretch reads RALVVDDSGF…SGDMEQVKRQ (118 aa). Asp-55 is modified (4-aspartylphosphate). The segment at 130–198 is disordered; it reads GGGRGAPAGR…AAPAPERGQR (69 aa). 2 stretches are compositionally biased toward low complexity: residues 136 to 148 and 179 to 193; these read PAGR…APVD and EAPV…APAP. Positions 201–390 constitute a CheB-type methylesterase domain; sequence PGALRLVVIG…QVGEELAKLR (190 aa). Active-site residues include Ser-212, His-239, and Asp-335.

Belongs to the CheB family. Post-translationally, phosphorylated by CheA. Phosphorylation of the N-terminal regulatory domain activates the methylesterase activity.

It localises to the cytoplasm. It carries out the reaction [protein]-L-glutamate 5-O-methyl ester + H2O = L-glutamyl-[protein] + methanol + H(+). The enzyme catalyses L-glutaminyl-[protein] + H2O = L-glutamyl-[protein] + NH4(+). Involved in chemotaxis. Part of a chemotaxis signal transduction system that modulates chemotaxis in response to various stimuli. Catalyzes the demethylation of specific methylglutamate residues introduced into the chemoreceptors (methyl-accepting chemotaxis proteins or MCP) by CheR. Also mediates the irreversible deamidation of specific glutamine residues to glutamic acid. This is Protein-glutamate methylesterase/protein-glutamine glutaminase from Alkalilimnicola ehrlichii (strain ATCC BAA-1101 / DSM 17681 / MLHE-1).